We begin with the raw amino-acid sequence, 345 residues long: NADH-quinone oxidoreductase subunit H (345 aa).

Helical transmembrane passes span 13-33 (VLIL…LLFL), 84-104 (FMLA…VIPF), 115-135 (VAIL…IMGG), 161-181 (LGLI…GGIV), 190-210 (FFSW…ISCL), 248-268 (YIAI…GWLS), 277-297 (VFWM…VKAI), and 309-329 (LGWK…AFAA).

The protein belongs to the complex I subunit 1 family. In terms of assembly, NDH-1 is composed of 14 different subunits. Subunits NuoA, H, J, K, L, M, N constitute the membrane sector of the complex.

It localises to the cell inner membrane. It catalyses the reaction a quinone + NADH + 5 H(+)(in) = a quinol + NAD(+) + 4 H(+)(out). Its function is as follows. NDH-1 shuttles electrons from NADH, via FMN and iron-sulfur (Fe-S) centers, to quinones in the respiratory chain. The immediate electron acceptor for the enzyme in this species is believed to be ubiquinone. Couples the redox reaction to proton translocation (for every two electrons transferred, four hydrogen ions are translocated across the cytoplasmic membrane), and thus conserves the redox energy in a proton gradient. This subunit may bind ubiquinone. In Roseobacter denitrificans (strain ATCC 33942 / OCh 114) (Erythrobacter sp. (strain OCh 114)), this protein is NADH-quinone oxidoreductase subunit H.